Here is a 75-residue protein sequence, read N- to C-terminus: uncharacterized protein (75 aa).

This is an uncharacterized protein from Saccharomyces cerevisiae (strain ATCC 204508 / S288c) (Baker's yeast).